A 139-amino-acid chain; its full sequence is Transcription antitermination protein NusB (139 aa).

It belongs to the NusB family.

In terms of biological role, involved in transcription antitermination. Required for transcription of ribosomal RNA (rRNA) genes. Binds specifically to the boxA antiterminator sequence of the ribosomal RNA (rrn) operons. The polypeptide is Transcription antitermination protein NusB (Natranaerobius thermophilus (strain ATCC BAA-1301 / DSM 18059 / JW/NM-WN-LF)).